The primary structure comprises 191 residues: Rho-related GTP-binding protein RhoG (191 aa).

10 to 17 (GDGAVGKT) serves as a coordination point for GTP. The Effector region motif lies at 32–40 (YIPTVFDNY). GTP-binding positions include 57 to 61 (DTAGQ) and 115 to 118 (TKKD). A phosphothreonine mark is found at Thr138 and Thr180. Position 188 is a cysteine methyl ester (Cys188). Cys188 is lipidated: S-geranylgeranyl cysteine. Residues 189–191 (ILL) constitute a propeptide, removed in mature form.

Belongs to the small GTPase superfamily. Rho family. In terms of assembly, interacts with ARHGEF26. Interacts with ARHGEF16. Interacts with UNC13D; the interaction increases RhoG affinity to the membrane lipids, targets UNC13D to membrane lipids and facilitates cytotoxic granule (CG) docking to the plasma membrane.

It localises to the cell membrane. Its function is as follows. Plays a role in immunological synaptic F-actin density and architecture organization. Regulates actin reorganization in lymphocytes, possibly through the modulation of Rac1 activity. Required for the formation of membrane ruffles during macropinocytosis. Plays a role in cell migration and is required for the formation of cup-like structures during trans-endothelial migration of leukocytes. Binds phospholipids in an activation-dependent manner; thereby acting as an anchor for other proteins to the plasma membrane (PM). Plays a role in exocytosis of cytotoxic granules (CG) by lymphocytes/Component of the exocytosis machinery in natural killer (NK) and CD8+ T cells. Promotes the docking of cytotoxic granules (CG) to the plasma membrane through the interaction with UNC13D. Involved in the cytotoxic activity of lymphocytes/primary CD8+ T cells. This is Rho-related GTP-binding protein RhoG (RHOG) from Cricetus cricetus (Black-bellied hamster).